The primary structure comprises 182 residues: Auxin-responsive protein IAA9 (182 aa).

The interval 1 to 41 is disordered; that stretch reads MELELGLAPPNSGHLVVDELSSSSSSGGGSGSAPVSASSAG. An EAR-like (transcriptional repression) motif is present at residues 3-7; it reads LELGL. Low complexity predominate over residues 32-41; that stretch reads SAPVSASSAG. One can recognise a PB1 domain in the interval 92 to 182; it reads ANYVKVKKEG…RSVKRLKILG (91 aa).

Belongs to the Aux/IAA family. In terms of assembly, homodimers and heterodimers. In terms of tissue distribution, expressed in etiolated shoots and flowers.

It is found in the nucleus. Its function is as follows. Aux/IAA proteins are short-lived transcriptional factors that function as repressors of early auxin response genes at low auxin concentrations. This chain is Auxin-responsive protein IAA9 (IAA9), found in Oryza sativa subsp. japonica (Rice).